Here is a 155-residue protein sequence, read N- to C-terminus: Protein-export protein SecB (155 aa).

The protein belongs to the SecB family. In terms of assembly, homotetramer, a dimer of dimers. One homotetramer interacts with 1 SecA dimer.

Its subcellular location is the cytoplasm. One of the proteins required for the normal export of preproteins out of the cell cytoplasm. It is a molecular chaperone that binds to a subset of precursor proteins, maintaining them in a translocation-competent state. It also specifically binds to its receptor SecA. This is Protein-export protein SecB from Psychromonas ingrahamii (strain DSM 17664 / CCUG 51855 / 37).